A 411-amino-acid chain; its full sequence is Carbohydrate sulfotransferase 1 (411 aa).

A topological domain (cytoplasmic) is located at residue Met1. The helical; Signal-anchor for type II membrane protein transmembrane segment at 2–23 threads the bilayer; sequence QCSWKAVLLLALASIAIQYTAI. Topologically, residues 24–411 are lumenal; sequence RTFTAKSFHT…VEERDFRPFL (388 aa). Asn56 is a glycosylation site (N-linked (GlcNAc...) asparagine). 69–75 provides a ligand contact to 3'-phosphoadenylyl sulfate; the sequence is TRSGSSF. Residues Asn145 and Asn189 are each glycosylated (N-linked (GlcNAc...) asparagine). Residue 234–242 coordinates 3'-phosphoadenylyl sulfate; the sequence is RDPRGILAS. The N-linked (GlcNAc...) asparagine glycan is linked to Asn334. The Cell attachment site signature appears at 337-339; sequence RGD.

The protein belongs to the sulfotransferase 1 family. Gal/GlcNAc/GalNAc subfamily.

It localises to the golgi apparatus membrane. The catalysed reaction is 3'-phosphoadenylyl sulfate + keratan = adenosine 3',5'-bisphosphate + keratan 6'-sulfate.. It functions in the pathway glycan metabolism. Sulfotransferase that utilizes 3'-phospho-5'-adenylyl sulfate (PAPS) as sulfonate donor to catalyze the transfer of sulfate to position 6 of internal galactose (Gal) residues of keratan. Cooperates with B4GALT4 and B3GNT7 glycosyltransferases and CHST6 sulfotransferase to construct and elongate disulfated disaccharide unit [-&gt;3(6-sulfoGalbeta)1-&gt;4(6-sulfoGlcNAcbeta)1-&gt;] within keratan sulfate polymer. Has a preference for sulfating keratan sulfate, but it also transfers sulfate to the unsulfated polymer. Involved in biosynthesis of phosphacan, a major keratan sulfate proteoglycan in the developing brain. Involved in biosynthesis of 6-sulfoGalbeta-containing O-linked glycans in high endothelial venules of lymph nodes. May act in a synergistic manner with CHST4 to generate sialyl 6',6-disulfo Lewis X motif, a recognition determinant for immune cell receptors implicated in leukocyte trafficking. Catalyzes sulfation of N-acetyllactosamine (LacNAc) oligosaccharides with highest efficiency for sialylated LacNAc structures. The sequence is that of Carbohydrate sulfotransferase 1 (Chst1) from Rattus norvegicus (Rat).